The primary structure comprises 538 residues: Bifunctional purine biosynthesis protein PurH (538 aa).

An MGS-like domain is found at 8–158 (IPAPDLVPVR…KNHAYVAIVT (151 aa)).

The protein belongs to the PurH family.

It catalyses the reaction (6R)-10-formyltetrahydrofolate + 5-amino-1-(5-phospho-beta-D-ribosyl)imidazole-4-carboxamide = 5-formamido-1-(5-phospho-D-ribosyl)imidazole-4-carboxamide + (6S)-5,6,7,8-tetrahydrofolate. The enzyme catalyses IMP + H2O = 5-formamido-1-(5-phospho-D-ribosyl)imidazole-4-carboxamide. It functions in the pathway purine metabolism; IMP biosynthesis via de novo pathway; 5-formamido-1-(5-phospho-D-ribosyl)imidazole-4-carboxamide from 5-amino-1-(5-phospho-D-ribosyl)imidazole-4-carboxamide (10-formyl THF route): step 1/1. Its pathway is purine metabolism; IMP biosynthesis via de novo pathway; IMP from 5-formamido-1-(5-phospho-D-ribosyl)imidazole-4-carboxamide: step 1/1. This is Bifunctional purine biosynthesis protein PurH from Mesorhizobium japonicum (strain LMG 29417 / CECT 9101 / MAFF 303099) (Mesorhizobium loti (strain MAFF 303099)).